The primary structure comprises 934 residues: Protein unc-45 homolog B (934 aa).

TPR repeat units lie at residues 9-42 (SVQLKEEGNKHFQAGEIDQAIDCYTKAIKTCKKE), 48-81 (AVIYRNRSACFLKKENYSNAASDATKAIDVDAAD), and 83-115 (KALYRRCQAFEKLGKLDMAFKDVQRCATIEPKN). 3 ARM repeats span residues 174 to 213 (DAGAERIFQNNGVPLLMQLIDTGKPEMILAAIRTLSGMCT), 216 to 255 (RARATAIIHSVGISKLCSIMAVDNEEIALATANLFQCVND), and 753 to 792 (DKLRVKILKEKALPEIENYMFEDHEQIRQAATECMCNLVC).

As to quaternary structure, interacts with apobec2a, apobec2b, hsp90a.1, hsp90a.2, hsp90ab1 and myosin. As to expression, expressed in striated muscle tissue including somites, heart and craniofacial muscle. Detected in mesoderm adjacent to the dorsal midline during the late gastrula stages and in somitic mesoderm during development of trunk skeletal muscle. Also expressed in cranial skeletal muscle and in cardiac and smooth muscle. Detected in somitic muscle and heart primordium of 24 hour embryos. At later stages, expressed in muscles of pectoral fins, jaw, branchial arches and eye.

The protein localises to the cytoplasm. The protein resides in the myofibril. It localises to the sarcomere. Its subcellular location is the z line. It is found in the a band. The protein localises to the perinuclear region. Functionally, acts as a co-chaperone for HSP90 and is required for proper folding of the myosin motor domain. Plays a role in sarcomere formation during muscle cell development. Required for myoseptal integrity, myofiber attachment, motility and craniofacial development. Is necessary for normal early lens development. The protein is Protein unc-45 homolog B of Danio rerio (Zebrafish).